The primary structure comprises 203 residues: Thymidylate kinase (203 aa).

10–17 (GMDGAGKS) lines the ATP pocket.

Belongs to the thymidylate kinase family.

The enzyme catalyses dTMP + ATP = dTDP + ADP. Its function is as follows. Phosphorylation of dTMP to form dTDP in both de novo and salvage pathways of dTTP synthesis. The chain is Thymidylate kinase from Methylobacillus flagellatus (strain ATCC 51484 / DSM 6875 / VKM B-1610 / KT).